A 283-amino-acid polypeptide reads, in one-letter code: Aldo-keto reductase Mmcs_1938 (283 aa).

Residue tyrosine 58 is the Proton donor of the active site. Glycine 196, leucine 198, valine 200, isoleucine 236, arginine 238, serine 239, alanine 240, arginine 244, serine 247, asparagine 248, and arginine 274 together coordinate NADPH.

The protein belongs to the aldo/keto reductase family.

This is Aldo-keto reductase Mmcs_1938 from Mycobacterium sp. (strain MCS).